The primary structure comprises 280 residues: UPF0750 membrane protein YitT (280 aa).

A run of 4 helical transmembrane segments spans residues 9–29 (LLIV…FLIP), 54–74 (FYIS…ILGW), 80–100 (SFTV…GILP), and 151–171 (VGTY…LLQG).

It belongs to the UPF0750 family.

It is found in the cell membrane. This chain is UPF0750 membrane protein YitT (yitT), found in Bacillus subtilis (strain 168).